The chain runs to 774 residues: Beta-xylosidase/alpha-L-arabinofuranosidase 2 (774 aa).

The first 33 residues, 1–33, serve as a signal peptide directing secretion; the sequence is MASVENRTPNVSVFLCFFVLFATLLLSGGRVSS. N-linked (GlcNAc...) asparagine glycosylation occurs at Asn-136. Asp-303 is an active-site residue. Residue Asn-437 is glycosylated (N-linked (GlcNAc...) asparagine).

The protein belongs to the glycoside hydrolase 3 family.

Its subcellular location is the secreted. The protein resides in the extracellular space. The protein localises to the extracellular matrix. It carries out the reaction Hydrolysis of (1-&gt;4)-beta-D-xylans, to remove successive D-xylose residues from the non-reducing termini.. The catalysed reaction is Hydrolysis of terminal non-reducing alpha-L-arabinofuranoside residues in alpha-L-arabinosides.. In terms of biological role, a bifunctional beta-xylosidase/alpha-L-arabinosidase, exo-enzyme that acts synergistically with endohydrolases. Releases xylose and arabinose from cell walls. The sequence is that of Beta-xylosidase/alpha-L-arabinofuranosidase 2 from Medicago sativa subsp. varia (Alfalfa).